Consider the following 36-residue polypeptide: Egg-laying-like hormone (36 aa).

A Lysine amide modification is found at K36.

As to expression, supra, subesophageal ganglia and segmental ganglia of the ventral nerve cord and brain.

May be involved in leech reproduction. This Theromyzon tessulatum (Duck leech) protein is Egg-laying-like hormone.